The chain runs to 560 residues: Terminal uridylyltransferase Tailor (560 aa).

Residues Glu169–Gln197 form a disordered region. Residues Pro176 to Gln188 show a composition bias toward low complexity. Residues Asp278 and Asp280 each coordinate Mg(2+). Positions Leu455 to His522 constitute a PAP-associated domain.

Mg(2+) serves as cofactor.

It localises to the cytoplasm. It catalyses the reaction RNA(n) + UTP = RNA(n)-3'-uridine ribonucleotide + diphosphate. Uridylyltransferase which mediates terminal uridylation of miRNAs, leading to their degradation. Has high specificity for splicing-derived miRNAs (mirtrons) and other miRNA substrates containing a 3'-G terminal nucleotide. Appears to be a major suppressor of mirtron biogenesis. This Drosophila melanogaster (Fruit fly) protein is Terminal uridylyltransferase Tailor.